Reading from the N-terminus, the 252-residue chain is Transcriptional regulatory protein HptR (252 aa).

The region spanning 3–118 (KVVICDDERI…QLEVILGRLV (116 aa)) is the Response regulatory domain. Asp55 is modified (4-aspartylphosphate). The region spanning 153 to 250 (NQIVDQIKQS…QMSPSDYCKQ (98 aa)) is the HTH araC/xylS-type domain. 2 consecutive DNA-binding regions (H-T-H motif) follow at residues 170-191 (SDLI…KDHV) and 217-240 (HYEI…KKYL).

Post-translationally, phosphorylated by HptS.

The protein localises to the cytoplasm. Member of the two-component regulatory system HptS/HptR that regulates genes involved in hexose phosphate transport system in response to changes in extracellular phosphate sources. Activates uhpT expression to facilitate glucose-6-phosphate/G6P utilization by directly binding to its promoter. Antagonizes CcpA-dependent transcription of a subset of CcpA-regulated genes involved in antibiotic susceptibility. This Staphylococcus aureus (strain Mu50 / ATCC 700699) protein is Transcriptional regulatory protein HptR (hptR).